Reading from the N-terminus, the 334-residue chain is Adenosine deaminase (334 aa).

Zn(2+)-binding residues include histidine 12 and histidine 14. Substrate contacts are provided by histidine 14, aspartate 16, and glycine 170. Histidine 197 contacts Zn(2+). Glutamate 200 functions as the Proton donor in the catalytic mechanism. Aspartate 278 provides a ligand contact to Zn(2+). Residue aspartate 279 coordinates substrate.

Belongs to the metallo-dependent hydrolases superfamily. Adenosine and AMP deaminases family. Adenosine deaminase subfamily. It depends on Zn(2+) as a cofactor.

It catalyses the reaction adenosine + H2O + H(+) = inosine + NH4(+). It carries out the reaction 2'-deoxyadenosine + H2O + H(+) = 2'-deoxyinosine + NH4(+). Its function is as follows. Catalyzes the hydrolytic deamination of adenosine and 2-deoxyadenosine. This is Adenosine deaminase from Vibrio parahaemolyticus serotype O3:K6 (strain RIMD 2210633).